The primary structure comprises 133 residues: Fluoride-specific ion channel FluC (133 aa).

A run of 4 helical transmembrane segments spans residues 3 to 23, 41 to 61, 76 to 96, and 103 to 123; these read AVVW…GSGL, WGTL…LIWV, IVGL…CLVF, and LIVG…VFLG. The Na(+) site is built by G81 and T84.

This sequence belongs to the fluoride channel Fluc/FEX (TC 1.A.43) family.

The protein resides in the cell inner membrane. The enzyme catalyses fluoride(in) = fluoride(out). Its activity is regulated as follows. Na(+) is not transported, but it plays an essential structural role and its presence is essential for fluoride channel function. Its function is as follows. Fluoride-specific ion channel. Important for reducing fluoride concentration in the cell, thus reducing its toxicity. The sequence is that of Fluoride-specific ion channel FluC from Xylella fastidiosa (strain M23).